Here is a 137-residue protein sequence, read N- to C-terminus: Large ribosomal subunit protein uL16 (137 aa).

This sequence belongs to the universal ribosomal protein uL16 family. As to quaternary structure, part of the 50S ribosomal subunit.

In terms of biological role, binds 23S rRNA and is also seen to make contacts with the A and possibly P site tRNAs. The sequence is that of Large ribosomal subunit protein uL16 from Xanthomonas axonopodis pv. citri (strain 306).